Reading from the N-terminus, the 159-residue chain is MKIRIGHGFDVHKFGGEPPLILGGVTVPYEVGLIAHSDGDVVLHAISDAILGAMALGDIGKHFPDTDAEFKGADSRVLLKHCYQLALNMGFSMSNLDVTVIAQAPKMAPHIEAIRSVIAADLQSDIDDINVKATTTEKLGFTGRKEGIAVEAVVLMTKI.

A divalent metal cation-binding residues include D10 and H12. Residues 10–12 (DVH) and 36–37 (HS) contribute to the 4-CDP-2-C-methyl-D-erythritol 2-phosphate site. H44 contacts a divalent metal cation. 4-CDP-2-C-methyl-D-erythritol 2-phosphate-binding positions include 58–60 (DIG), 63–67 (FPDTD), 102–108 (AQAPKMA), 134–137 (TTTE), F141, and R144.

Belongs to the IspF family. In terms of assembly, homotrimer. The cofactor is a divalent metal cation.

It catalyses the reaction 4-CDP-2-C-methyl-D-erythritol 2-phosphate = 2-C-methyl-D-erythritol 2,4-cyclic diphosphate + CMP. The protein operates within isoprenoid biosynthesis; isopentenyl diphosphate biosynthesis via DXP pathway; isopentenyl diphosphate from 1-deoxy-D-xylulose 5-phosphate: step 4/6. Involved in the biosynthesis of isopentenyl diphosphate (IPP) and dimethylallyl diphosphate (DMAPP), two major building blocks of isoprenoid compounds. Catalyzes the conversion of 4-diphosphocytidyl-2-C-methyl-D-erythritol 2-phosphate (CDP-ME2P) to 2-C-methyl-D-erythritol 2,4-cyclodiphosphate (ME-CPP) with a corresponding release of cytidine 5-monophosphate (CMP). This chain is 2-C-methyl-D-erythritol 2,4-cyclodiphosphate synthase, found in Shewanella piezotolerans (strain WP3 / JCM 13877).